A 687-amino-acid chain; its full sequence is Putative lipase YDR444W (687 aa).

Ser284 serves as the catalytic Charge relay system. Disordered regions lie at residues 429–472 (IRKK…AESP), 491–513 (KINK…EQGV), and 650–687 (ELAE…ENAT). Over residues 436–463 (SPTSSEFVSSDSPESSGASSPSNENGNN) the composition is skewed to low complexity. Residues 670–681 (RSNEYNEGEISK) show a composition bias toward basic and acidic residues.

It belongs to the putative lipase ROG1 family.

The protein resides in the cytoplasm. The protein is Putative lipase YDR444W of Saccharomyces cerevisiae (strain ATCC 204508 / S288c) (Baker's yeast).